The chain runs to 65 residues: MPKMKSHRGACKRFKATASGRIKRERMNGSHNLEHKNRKRTRRLHQSALLECTKKERQIKRMILA.

This sequence belongs to the bacterial ribosomal protein bL35 family.

This chain is Large ribosomal subunit protein bL35, found in Chlorobium phaeovibrioides (strain DSM 265 / 1930) (Prosthecochloris vibrioformis (strain DSM 265)).